An 853-amino-acid chain; its full sequence is Probable inorganic carbon transporter subunit DabA (853 aa).

Residues 1-21 form a disordered region; that stretch reads MSHANSEETMMNTAVAHPSTS. Residues 7–21 are compositionally biased toward polar residues; that stretch reads EETMMNTAVAHPSTS. Residues Cys364, Asp366, His546, and Cys561 each coordinate Zn(2+).

The protein belongs to the inorganic carbon transporter (TC 9.A.2) DabA family. Forms a complex with DabB. It depends on Zn(2+) as a cofactor.

Its subcellular location is the cell inner membrane. Functionally, part of an energy-coupled inorganic carbon pump. This is Probable inorganic carbon transporter subunit DabA from Methylovorus glucosotrophus (strain SIP3-4).